Here is a 1372-residue protein sequence, read N- to C-terminus: DNA-directed RNA polymerase subunit beta' (1372 aa).

The Zn(2+) site is built by Cys69, Cys71, Cys84, and Cys87. Mg(2+) is bound by residues Asp460, Asp462, and Asp464. Zn(2+)-binding residues include Cys808, Cys882, Cys889, and Cys892.

It belongs to the RNA polymerase beta' chain family. The RNAP catalytic core consists of 2 alpha, 1 beta, 1 beta' and 1 omega subunit. When a sigma factor is associated with the core the holoenzyme is formed, which can initiate transcription. It depends on Mg(2+) as a cofactor. Requires Zn(2+) as cofactor.

It catalyses the reaction RNA(n) + a ribonucleoside 5'-triphosphate = RNA(n+1) + diphosphate. Functionally, DNA-dependent RNA polymerase catalyzes the transcription of DNA into RNA using the four ribonucleoside triphosphates as substrates. The chain is DNA-directed RNA polymerase subunit beta' from Rickettsia akari (strain Hartford).